The sequence spans 277 residues: 3-methyl-2-oxobutanoate hydroxymethyltransferase (277 aa).

The Mg(2+) site is built by Asp43 and Asp82. 3-methyl-2-oxobutanoate-binding positions include 43 to 44 (DS), Asp82, and Lys112. Glu114 is a binding site for Mg(2+). The active-site Proton acceptor is Glu181.

The protein belongs to the PanB family. As to quaternary structure, homodecamer; pentamer of dimers. Requires Mg(2+) as cofactor.

The protein localises to the cytoplasm. It catalyses the reaction 3-methyl-2-oxobutanoate + (6R)-5,10-methylene-5,6,7,8-tetrahydrofolate + H2O = 2-dehydropantoate + (6S)-5,6,7,8-tetrahydrofolate. The protein operates within cofactor biosynthesis; (R)-pantothenate biosynthesis; (R)-pantoate from 3-methyl-2-oxobutanoate: step 1/2. Its function is as follows. Catalyzes the reversible reaction in which hydroxymethyl group from 5,10-methylenetetrahydrofolate is transferred onto alpha-ketoisovalerate to form ketopantoate. This Listeria monocytogenes serotype 4a (strain HCC23) protein is 3-methyl-2-oxobutanoate hydroxymethyltransferase.